A 278-amino-acid polypeptide reads, in one-letter code: Elongation factor Ts (278 aa).

Residues 81–84 (TDFV) are involved in Mg(2+) ion dislocation from EF-Tu.

It belongs to the EF-Ts family.

Its subcellular location is the cytoplasm. Its function is as follows. Associates with the EF-Tu.GDP complex and induces the exchange of GDP to GTP. It remains bound to the aminoacyl-tRNA.EF-Tu.GTP complex up to the GTP hydrolysis stage on the ribosome. The sequence is that of Elongation factor Ts from Thermobifida fusca (strain YX).